A 403-amino-acid polypeptide reads, in one-letter code: Odorant receptor 43b (403 aa).

Over 1 to 49 the chain is Cytoplasmic; sequence MFGHFKLVYPAPISEPIQSRDSNAYMMETLRNSGLNLKNDFGIGRKIWR. A helical membrane pass occupies residues 50 to 70; sequence VFSFTYNMVILPVSFPINYVI. Over 71 to 83 the chain is Extracellular; it reads HLAEFPPELLLQS. The chain crosses the membrane as a helical span at residues 84-104; it reads LQLCLNTWCFALKFFTLIVYT. The Cytoplasmic segment spans residues 105–139; the sequence is HRLELANKHFDELDKYCVKPAEKRKVRDMVATITR. A helical membrane pass occupies residues 140–160; the sequence is LYLTFVVVYVLYATSTLLDGL. Over 161–193 the chain is Extracellular; sequence LHHRVPYNTYYPFINWRVDRTQMYIQSFLEYFT. The chain crosses the membrane as a helical span at residues 194-214; that stretch reads VGYAIYVATATDSYPVIYVAA. Residues 215-271 lie on the Cytoplasmic side of the membrane; sequence LRTHILLLKDRIIYLGDPSNEGSSDPSYMFKSLVDCIKAHRTMLNFCDAIQPIISGT. Residues 272–292 form a helical membrane-spanning segment; that stretch reads IFAQFIICGSILGIIMINMVL. At 293–299 the chain is on the extracellular side; that stretch reads FADQSTR. Residues 300-320 traverse the membrane as a helical segment; sequence FGIVIYVMAVLLQTFPLCFYC. Residues 321 to 372 lie on the Cytoplasmic side of the membrane; the sequence is NAIVDDCKELAHALFHSAWWVQDKRYQRTVIQFLQKLQQPMTFTAMNIFNIN. The helical transmembrane segment at 373-393 threads the bilayer; that stretch reads LATNINVAKFAFTVYAIASGM. At 394–403 the chain is on the extracellular side; that stretch reads NLDQKLSIKE.

This sequence belongs to the insect chemoreceptor superfamily. Heteromeric odorant receptor channel (TC 1.A.69) family. Or2a subfamily. In terms of assembly, interacts with Orco. Complexes exist early in the endomembrane system in olfactory sensory neurons (OSNs), coupling these complexes to the conserved ciliary trafficking pathway. Expressed in 16 olfactory receptor neurons in a broad area across the antenna, including both anterior and posterior faces and in the maxillary palp. This expression pattern matches the distribution of the small sensilla basiconica. Expression in the antenna is observed late in antennal development at 93 hours APF.

Its subcellular location is the cell membrane. Its function is as follows. Odorant receptor which mediates acceptance or avoidance behavior, depending on its substrates. The odorant receptor repertoire encodes a large collection of odor stimuli that vary widely in identity, intensity, and duration. May form a complex with Orco to form odorant-sensing units, providing sensitive and prolonged odorant signaling and calcium permeability. The polypeptide is Odorant receptor 43b (Or43b) (Drosophila melanogaster (Fruit fly)).